A 132-amino-acid polypeptide reads, in one-letter code: Protein NrdI (132 aa).

The protein belongs to the NrdI family.

In terms of biological role, probably involved in ribonucleotide reductase function. The polypeptide is Protein NrdI (Bartonella tribocorum (strain CIP 105476 / IBS 506)).